Consider the following 439-residue polypeptide: Methylenetetrahydrofolate--tRNA-(uracil-5-)-methyltransferase TrmFO (439 aa).

Residue 8–13 (GGGLAG) coordinates FAD.

Belongs to the MnmG family. TrmFO subfamily. Requires FAD as cofactor.

The protein resides in the cytoplasm. It catalyses the reaction uridine(54) in tRNA + (6R)-5,10-methylene-5,6,7,8-tetrahydrofolate + NADH + H(+) = 5-methyluridine(54) in tRNA + (6S)-5,6,7,8-tetrahydrofolate + NAD(+). The enzyme catalyses uridine(54) in tRNA + (6R)-5,10-methylene-5,6,7,8-tetrahydrofolate + NADPH + H(+) = 5-methyluridine(54) in tRNA + (6S)-5,6,7,8-tetrahydrofolate + NADP(+). Its function is as follows. Catalyzes the folate-dependent formation of 5-methyl-uridine at position 54 (M-5-U54) in all tRNAs. This chain is Methylenetetrahydrofolate--tRNA-(uracil-5-)-methyltransferase TrmFO, found in Dictyoglomus turgidum (strain DSM 6724 / Z-1310).